A 434-amino-acid chain; its full sequence is Histidinol dehydrogenase (434 aa).

NAD(+) contacts are provided by tyrosine 130, glutamine 188, and asparagine 211. Substrate-binding residues include serine 237, glutamine 259, and histidine 262. Residues glutamine 259 and histidine 262 each contribute to the Zn(2+) site. Catalysis depends on proton acceptor residues glutamate 326 and histidine 327. 4 residues coordinate substrate: histidine 327, aspartate 360, glutamate 414, and histidine 419. Aspartate 360 serves as a coordination point for Zn(2+). Histidine 419 serves as a coordination point for Zn(2+).

It belongs to the histidinol dehydrogenase family. Homodimer. Zn(2+) is required as a cofactor.

The enzyme catalyses L-histidinol + 2 NAD(+) + H2O = L-histidine + 2 NADH + 3 H(+). It functions in the pathway amino-acid biosynthesis; L-histidine biosynthesis; L-histidine from 5-phospho-alpha-D-ribose 1-diphosphate: step 9/9. In terms of biological role, catalyzes the sequential NAD-dependent oxidations of L-histidinol to L-histidinaldehyde and then to L-histidine. In Shigella boydii serotype 4 (strain Sb227), this protein is Histidinol dehydrogenase.